Consider the following 382-residue polypeptide: 4-hydroxybutyrate dehydrogenase (382 aa).

NAD(+)-binding positions include D37, N67, 94 to 98 (GSSID), 138 to 142 (TTSGT), and K159. D193, H197, H261, and H280 together coordinate Fe cation. H280 is a binding site for NAD(+).

It belongs to the iron-containing alcohol dehydrogenase family. Fe cation is required as a cofactor.

The enzyme catalyses 4-hydroxybutanoate + NAD(+) = succinate semialdehyde + NADH + H(+). With respect to regulation, shows competitive inhibition of GHBDH activity by the product succinic semialdehyde, and non-competitive inhibitions by the three other substrate-product combinations. The conversion of GHB to SSA is activated by two different saturating purified nudix hydrolases, B.methanolicus activator ACT and E.coli NudF. The nudix hydrolases do not activate the reverse reaction. Involved in the degradation of 4-hydroxybutyrate. Catalyzes the interconversion of gamma-hydroxybutyrate (GHB) and succinic semialdehyde (SSA). In Cupriavidus necator (Alcaligenes eutrophus), this protein is 4-hydroxybutyrate dehydrogenase.